The primary structure comprises 392 residues: Cyclic di-GMP phosphodiesterase RocR (392 aa).

In terms of domain architecture, Response regulatory spans 5–126; the sequence is NVLVLEDEPF…RITALLTRYN (122 aa). Asp-56 carries the post-translational modification 4-aspartylphosphate. The EAL domain maps to 140-392; the sequence is ELPSVADVVR…QHFLDYCSGS (253 aa). The Mg(2+) site is built by Glu-175, Asn-233, Glu-265, and Asp-295. Catalysis depends on Glu-352, which acts as the Proton acceptor.

As to quaternary structure, homotetramer. Exhibits a highly unusual tetrameric structure arranged around a single dyad, with the four subunits adopting two distinctly different conformations, with only two active sites accessible for substrate binding. Interacts with RocS1. It depends on Mg(2+) as a cofactor.

The catalysed reaction is 3',3'-c-di-GMP + H2O = 5'-phosphoguanylyl(3'-&gt;5')guanosine + H(+). Its activity is regulated as follows. Phosphorylation of Asp-56 probably induces local conformational changes in the response regulatory domain. These structural changes are transmitted to the adjacent EAL domain, then the signal is further transmitted down to the active site. The phosphodiesterase activity is inhibited by Ca(2+) and Zn(2+). Phosphodiesterase activity is inhibited by a benzoisothiazolinone derivative that specifically inhibited RocR, but not some other phosphodiesterases. In terms of biological role, phosphodiesterase (PDE) that catalyzes the hydrolysis of cyclic diguanylate (c-di-GMP) to 5'-pGpG. Cannot use cyclic AMP or cyclic GMP. Part of the RocSAR two-component regulatory signaling system (also known as the SadARS system), which regulates biofilm maturation, type III secretion and expression of the cup fimbrial-gene cluster. Negatively regulates the expression of cup genes by antagonizing the activity of RocA1. The chain is Cyclic di-GMP phosphodiesterase RocR from Pseudomonas aeruginosa (strain ATCC 15692 / DSM 22644 / CIP 104116 / JCM 14847 / LMG 12228 / 1C / PRS 101 / PAO1).